Consider the following 308-residue polypeptide: MQPPGDNAPAGCPFSGAHAAQPAHEAPHVPGDAAGEAGWHDAQLDFSKSMSYGDYLSLNSILDAQHPLSPDHNEMLFIIQHQTSELWMKLALFELRGALDAVRGDALPPAFKMLARVSRILEQLVQAWNVLSTMTPSEYSAMRPYLGQSSGFQSYQYRQLEFLLGNKNVQMLQPHAHRPDILEQVRATLEAPSFYDEVVRLLARRGFPIAPERLERDWTQPMRHDETVEAAWLEVYRHPQQHWELYEMAEELVDLEDAFRQWRFRHVTTVERIIGFKQGTGGTSGAPYLRKMLDVVLFPELWHVRTTL.

Residues 1–35 are disordered; the sequence is MQPPGDNAPAGCPFSGAHAAQPAHEAPHVPGDAAG. Residues 17–30 show a composition bias toward low complexity; sequence AHAAQPAHEAPHVP. Substrate-binding positions include 77–81, Tyr139, and Arg143; that span reads FIIQH. Heme is bound at residue His266. Position 280 (Thr280) interacts with substrate.

This sequence belongs to the tryptophan 2,3-dioxygenase family. In terms of assembly, homotetramer. The cofactor is heme.

It catalyses the reaction L-tryptophan + O2 = N-formyl-L-kynurenine. The protein operates within amino-acid degradation; L-tryptophan degradation via kynurenine pathway; L-kynurenine from L-tryptophan: step 1/2. In terms of biological role, heme-dependent dioxygenase that catalyzes the oxidative cleavage of the L-tryptophan (L-Trp) pyrrole ring and converts L-tryptophan to N-formyl-L-kynurenine. Catalyzes the oxidative cleavage of the indole moiety. The protein is Tryptophan 2,3-dioxygenase of Burkholderia ambifaria (strain ATCC BAA-244 / DSM 16087 / CCUG 44356 / LMG 19182 / AMMD) (Burkholderia cepacia (strain AMMD)).